Reading from the N-terminus, the 235-residue chain is 1-(5-phosphoribosyl)-5-[(5-phosphoribosylamino)methylideneamino] imidazole-4-carboxamide isomerase (235 aa).

D8 (proton acceptor) is an active-site residue. Residue D127 is the Proton donor of the active site.

This sequence belongs to the HisA/HisF family.

The protein resides in the cytoplasm. The enzyme catalyses 1-(5-phospho-beta-D-ribosyl)-5-[(5-phospho-beta-D-ribosylamino)methylideneamino]imidazole-4-carboxamide = 5-[(5-phospho-1-deoxy-D-ribulos-1-ylimino)methylamino]-1-(5-phospho-beta-D-ribosyl)imidazole-4-carboxamide. It functions in the pathway amino-acid biosynthesis; L-histidine biosynthesis; L-histidine from 5-phospho-alpha-D-ribose 1-diphosphate: step 4/9. The sequence is that of 1-(5-phosphoribosyl)-5-[(5-phosphoribosylamino)methylideneamino] imidazole-4-carboxamide isomerase from Nautilia profundicola (strain ATCC BAA-1463 / DSM 18972 / AmH).